A 111-amino-acid polypeptide reads, in one-letter code: uncharacterized protein (111 aa).

Helical transmembrane passes span 4 to 21 (FITA…FVSF), 28 to 47 (LVYF…YMIY), 51 to 73 (TGIR…VTAF), and 80 to 102 (SFFF…YLGM).

The protein localises to the cell membrane. This is an uncharacterized protein from Bacillus subtilis (strain 168).